A 510-amino-acid polypeptide reads, in one-letter code: 2,3-bisphosphoglycerate-independent phosphoglycerate mutase (510 aa).

The Mn(2+) site is built by Asp-10 and Ser-60. The Phosphoserine intermediate role is filled by Ser-60. Residues His-121, 150–151 (RD), Arg-182, Arg-188, 252–255 (RPDR), and Lys-325 each bind substrate. 5 residues coordinate Mn(2+): Asp-392, His-396, Asp-433, His-434, and His-451.

Belongs to the BPG-independent phosphoglycerate mutase family. Requires Mn(2+) as cofactor.

The protein resides in the plastid. It is found in the chloroplast. The catalysed reaction is (2R)-2-phosphoglycerate = (2R)-3-phosphoglycerate. The protein operates within carbohydrate degradation; glycolysis; pyruvate from D-glyceraldehyde 3-phosphate: step 3/5. Its function is as follows. Catalyzes the interconversion of 2-phosphoglycerate and 3-phosphoglycerate. This chain is 2,3-bisphosphoglycerate-independent phosphoglycerate mutase, found in Gracilaria tenuistipitata var. liui (Red alga).